Consider the following 905-residue polypeptide: Tight junction protein ZO-3 (905 aa).

The 83-residue stretch at 11 to 93 (TATLYKDPRR…TANVTVKRPR (83 aa)) folds into the PDZ 1 domain. Positions 92-167 (PRRVQLPATK…GGGSEANGLD (76 aa)) are disordered. Residues Ser111 and Ser128 each carry the phosphoserine modification. Over residues 124–133 (GDSSSGSGRS) the composition is skewed to low complexity. A compositionally biased stretch (basic residues) spans 139-155 (RRSRAGRRGRVGSHGRR). Ser156, Ser157, Ser161, Ser195, and Ser311 each carry phosphoserine. One can recognise a PDZ 2 domain in the interval 187–264 (SVLVKRRNSE…ELTLLVLRDS (78 aa)). A disordered region spans residues 289 to 367 (LTSELSQAPP…QSLEDRGYSP (79 aa)). Thr317 is subject to Phosphothreonine. 3 positions are modified to phosphoserine: Ser319, Ser343, and Ser359. Residues 368–434 (DTRVVSFPKG…LTREEAVQFL (67 aa)) form the PDZ 3 domain. In terms of domain architecture, SH3 spans 464–541 (GDSFYIRTHF…PNQSRAEQLA (78 aa)). The Guanylate kinase-like domain occupies 573 to 754 (RRGTKKASTQ…WYQEVKAVIQ (182 aa)). Ser584 is modified (phosphoserine). Disordered regions lie at residues 773–818 (EDLD…PQDV) and 850–905 (TDKW…ATDL). Residues 851-877 (DKWETQADSHYTQDQRRQDSMRTYKHE) show a composition bias toward basic and acidic residues. Residues Ser891 and Ser892 each carry the phosphoserine modification.

Belongs to the MAGUK family. In terms of assembly, interacts with occludin OCLN, claudins and TPJ1. Interacts with PATJ. Interacts with UBN1. Interacts with FASLG. Interacts with CCND1. Post-translationally, phosphorylated. As to expression, is concentrated in various types of epithelium, in tissues such as the lung, liver and kidney, but not in endothelium or at cadherin-based cell-cell adhesion sites.

Its subcellular location is the cell membrane. The protein localises to the cell junction. It is found in the tight junction. It localises to the nucleus. Its function is as follows. Tjp1, Tjp2, and Tjp3 are closely related scaffolding proteins that link tight junction (TJ) transmembrane proteins such as claudins, junctional adhesion molecules, and occludin to the actin cytoskeleton. The tight junction acts to limit movement of substances through the paracellular space and as a boundary between the compositionally distinct apical and basolateral plasma membrane domains of epithelial and endothelial cells. Binds and recruits PatJ to tight junctions where it connects and stabilizes apical and lateral components of tight junctions. Promotes cell-cycle progression through the sequestration of cyclin D1 (Ccnd1) at tight junctions during mitosis which prevents Ccnd1 degradation during M-phase and enables S-phase transition. With Tjp1 and Tjp2, participates in the junctional retention and stability of the transcription factor DbpA, but is not involved in its shuttling to the nucleus. Contrary to Tjp2, Tjp3 is dispensable for individual viability, embryonic development, epithelial differentiation, and the establishment of TJs, at least in the laboratory environment. This chain is Tight junction protein ZO-3 (Tjp3), found in Mus musculus (Mouse).